The chain runs to 176 residues: MNRAAIRIIGIDPGLRNMGWGVIEASGSRLSFIACGSVHSQAGSSLAERLCALHEGLLGVIADLSPMEAAVEETFVNCDPQSALKLGQARGVALVAPALAGLPVAEYAANLIKKTVVGNGHAEKAQIAMMVKFLLPMSEAKSADAADALAVAITHAQLRASRALLKSVSSMSVQTR.

Residues aspartate 12, glutamate 72, and aspartate 144 contribute to the active site. Mg(2+) contacts are provided by aspartate 12, glutamate 72, and aspartate 144.

It belongs to the RuvC family. Homodimer which binds Holliday junction (HJ) DNA. The HJ becomes 2-fold symmetrical on binding to RuvC with unstacked arms; it has a different conformation from HJ DNA in complex with RuvA. In the full resolvosome a probable DNA-RuvA(4)-RuvB(12)-RuvC(2) complex forms which resolves the HJ. It depends on Mg(2+) as a cofactor.

The protein localises to the cytoplasm. The catalysed reaction is Endonucleolytic cleavage at a junction such as a reciprocal single-stranded crossover between two homologous DNA duplexes (Holliday junction).. Its function is as follows. The RuvA-RuvB-RuvC complex processes Holliday junction (HJ) DNA during genetic recombination and DNA repair. Endonuclease that resolves HJ intermediates. Cleaves cruciform DNA by making single-stranded nicks across the HJ at symmetrical positions within the homologous arms, yielding a 5'-phosphate and a 3'-hydroxyl group; requires a central core of homology in the junction. The consensus cleavage sequence is 5'-(A/T)TT(C/G)-3'. Cleavage occurs on the 3'-side of the TT dinucleotide at the point of strand exchange. HJ branch migration catalyzed by RuvA-RuvB allows RuvC to scan DNA until it finds its consensus sequence, where it cleaves and resolves the cruciform DNA. The polypeptide is Crossover junction endodeoxyribonuclease RuvC (Methylocella silvestris (strain DSM 15510 / CIP 108128 / LMG 27833 / NCIMB 13906 / BL2)).